A 207-amino-acid chain; its full sequence is Probable mediator of RNA polymerase II transcription subunit 19b (207 aa).

Residues 99–207 are disordered; that stretch reads DTAPVELPPA…SSKLDEMGAM (109 aa). The span at 127–152 shows a compositional bias: basic residues; that stretch reads DRKHRKHKDKKEKDREHKKHKHKHKD. Basic and acidic residues predominate over residues 153 to 167; that stretch reads RIKDKDKDKDRDKKK. The segment covering 168–179 has biased composition (basic residues); the sequence is EKSGHHDKKRKN.

It belongs to the plant Mediator complex subunit 19 family. Component of the Mediator complex.

It localises to the nucleus. Its function is as follows. Component of the Mediator complex, a coactivator involved in the regulated transcription of nearly all RNA polymerase II-dependent genes. Mediator functions as a bridge to convey information from gene-specific regulatory proteins to the basal RNA polymerase II transcription machinery. The Mediator complex, having a compact conformation in its free form, is recruited to promoters by direct interactions with regulatory proteins and serves for the assembly of a functional preinitiation complex with RNA polymerase II and the general transcription factors. This is Probable mediator of RNA polymerase II transcription subunit 19b (MED19B) from Arabidopsis thaliana (Mouse-ear cress).